Reading from the N-terminus, the 157-residue chain is ATP synthase subunit b (157 aa).

Residues 7-27 (LIAQLVVFFILAWVTMKFVWP) form a helical membrane-spanning segment.

This sequence belongs to the ATPase B chain family. F-type ATPases have 2 components, F(1) - the catalytic core - and F(0) - the membrane proton channel. F(1) has five subunits: alpha(3), beta(3), gamma(1), delta(1), epsilon(1). F(0) has three main subunits: a(1), b(2) and c(10-14). The alpha and beta chains form an alternating ring which encloses part of the gamma chain. F(1) is attached to F(0) by a central stalk formed by the gamma and epsilon chains, while a peripheral stalk is formed by the delta and b chains.

It is found in the cell inner membrane. F(1)F(0) ATP synthase produces ATP from ADP in the presence of a proton or sodium gradient. F-type ATPases consist of two structural domains, F(1) containing the extramembraneous catalytic core and F(0) containing the membrane proton channel, linked together by a central stalk and a peripheral stalk. During catalysis, ATP synthesis in the catalytic domain of F(1) is coupled via a rotary mechanism of the central stalk subunits to proton translocation. Functionally, component of the F(0) channel, it forms part of the peripheral stalk, linking F(1) to F(0). The polypeptide is ATP synthase subunit b (Aromatoleum aromaticum (strain DSM 19018 / LMG 30748 / EbN1) (Azoarcus sp. (strain EbN1))).